We begin with the raw amino-acid sequence, 167 residues long: UPF0303 protein mlr5144 (167 aa).

The protein belongs to the UPF0303 family.

This Mesorhizobium japonicum (strain LMG 29417 / CECT 9101 / MAFF 303099) (Mesorhizobium loti (strain MAFF 303099)) protein is UPF0303 protein mlr5144.